The following is a 430-amino-acid chain: MSIITEVYAREVLDSRGNPTVEVEVYTEAGAFGRALVPSGASTGEYEAVELRDGDKARYLGKGVLKAVENVNDIIADKIIGFDVTDQIGIDKAMIELDGTPNKGKLGANAILGVSLAAARAAADELGVHLYEYLGGVNGKVLPVPMMNILNGGEHADNNVDVQEFMVMPVGAPNFKEALRMGAEILHALKAVLKGKGLNTGVGDEGGFAPNLKSNEEALETIMQAIKDAGYKPGEEVKLAMDAASSEFYNRETGKYELKGEGVTRTSEEMVTWYEEMITKYPIISIEDGLDENDWDGFKLLTERIGDRVQLVGDDLFVTNTTKLKEGIEKGIANSILIKVNQIGTLTETLDAIEMAKRAGYTAVISHRSGETEDSTIADIAVATNAGQIKTGAPTRTDRVAKYNQLLRIEDNLADLAEYHGNDTFYNLKK.

Glutamine 163 contacts (2R)-2-phosphoglycerate. The active-site Proton donor is glutamate 205. Positions 242, 287, and 314 each coordinate Mg(2+). The (2R)-2-phosphoglycerate site is built by lysine 339, arginine 368, serine 369, and lysine 390. Lysine 339 acts as the Proton acceptor in catalysis.

Belongs to the enolase family. It depends on Mg(2+) as a cofactor.

The protein localises to the cytoplasm. It localises to the secreted. The protein resides in the cell surface. The enzyme catalyses (2R)-2-phosphoglycerate = phosphoenolpyruvate + H2O. It participates in carbohydrate degradation; glycolysis; pyruvate from D-glyceraldehyde 3-phosphate: step 4/5. Functionally, catalyzes the reversible conversion of 2-phosphoglycerate (2-PG) into phosphoenolpyruvate (PEP). It is essential for the degradation of carbohydrates via glycolysis. This chain is Enolase, found in Listeria innocua serovar 6a (strain ATCC BAA-680 / CLIP 11262).